Reading from the N-terminus, the 535-residue chain is D-2-hydroxyglutarate dehydrogenase, mitochondrial (535 aa).

A mitochondrion-targeting transit peptide spans 1–50 (MVLHLVPRWSASLFRASPRWKKTYSQRASAQLKWLGCPRSVYSPLACRAY). The region spanning 110-289 (VRGCSKVLLR…TAVSIVCPPR (180 aa)) is the FAD-binding PCMH-type domain. Lys-115 carries the N6-succinyllysine modification. Arg-400, Thr-404, and Lys-415 together coordinate (R)-2-hydroxyglutarate. (R)-lactate is bound at residue Arg-400. Arg-400, Thr-404, and Lys-415 together coordinate (R)-malate. Residues His-448 and His-455 each contribute to the Zn(2+) site. Asn-457 serves as a coordination point for (R)-2-hydroxyglutarate. Position 489 (Glu-489) interacts with Zn(2+). His-490 lines the (R)-2-hydroxyglutarate pocket. Residue His-490 coordinates (R)-lactate. Residue His-490 coordinates (R)-malate.

The protein belongs to the FAD-binding oxidoreductase/transferase type 4 family. FAD is required as a cofactor.

Its subcellular location is the mitochondrion. It carries out the reaction (R)-2-hydroxyglutarate + A = 2-oxoglutarate + AH2. The catalysed reaction is (R)-malate + A = oxaloacetate + AH2. Activated by zinc, cobalt and manganese ions. Inhibited by EDTA. Functionally, catalyzes the oxidation of D-2-hydroxyglutarate (D-2-HG) to alpha-ketoglutarate. Also catalyzes the oxidation of other D-2-hydroxyacids, such as D-malate (D-MAL) and D-lactate (D-LAC). Exhibits high activities towards D-2-HG and D-MAL but a very weak activity towards D-LAC. The protein is D-2-hydroxyglutarate dehydrogenase, mitochondrial of Rattus norvegicus (Rat).